We begin with the raw amino-acid sequence, 270 residues long: Putative pyruvate, phosphate dikinase regulatory protein (270 aa).

An ADP-binding site is contributed by 151–158; sequence GVSRTSKT.

The protein belongs to the pyruvate, phosphate/water dikinase regulatory protein family. PDRP subfamily.

The enzyme catalyses N(tele)-phospho-L-histidyl/L-threonyl-[pyruvate, phosphate dikinase] + ADP = N(tele)-phospho-L-histidyl/O-phospho-L-threonyl-[pyruvate, phosphate dikinase] + AMP + H(+). It catalyses the reaction N(tele)-phospho-L-histidyl/O-phospho-L-threonyl-[pyruvate, phosphate dikinase] + phosphate + H(+) = N(tele)-phospho-L-histidyl/L-threonyl-[pyruvate, phosphate dikinase] + diphosphate. In terms of biological role, bifunctional serine/threonine kinase and phosphorylase involved in the regulation of the pyruvate, phosphate dikinase (PPDK) by catalyzing its phosphorylation/dephosphorylation. The polypeptide is Putative pyruvate, phosphate dikinase regulatory protein (Ligilactobacillus salivarius (strain UCC118) (Lactobacillus salivarius)).